The chain runs to 144 residues: Large ribosomal subunit protein uL15 (144 aa).

The disordered stretch occupies residues Met1–Arg48.

The protein belongs to the universal ribosomal protein uL15 family. Part of the 50S ribosomal subunit.

Binds to the 23S rRNA. This chain is Large ribosomal subunit protein uL15, found in Chlamydia trachomatis serovar L2 (strain ATCC VR-902B / DSM 19102 / 434/Bu).